We begin with the raw amino-acid sequence, 286 residues long: Beta-lactamase TEM (286 aa).

Positions 1–23 are cleaved as a signal peptide; sequence MSIQHFRVALIPFFAAFCLPVFA. The active-site Acyl-ester intermediate is the Ser68. Cys75 and Cys121 are disulfide-bonded. The active-site Proton acceptor is Glu166. 232–234 is a substrate binding site; that stretch reads KSG.

It belongs to the class-A beta-lactamase family.

It catalyses the reaction a beta-lactam + H2O = a substituted beta-amino acid. TEM-type are the most prevalent beta-lactamases in enterobacteria; they hydrolyze the beta-lactam bond in susceptible beta-lactam antibiotics, thus conferring resistance to penicillins and cephalosporins. TEM-3 and TEM-4 are capable of hydrolyzing cefotaxime and ceftazidime. TEM-5 is capable of hydrolyzing ceftazidime. TEM-6 is capable of hydrolyzing ceftazidime and aztreonam. TEM-8/CAZ-2, TEM-16/CAZ-7 and TEM-24/CAZ-6 are markedly active against ceftazidime. IRT-4 shows resistance to beta-lactamase inhibitors. The chain is Beta-lactamase TEM (bla) from Escherichia coli.